We begin with the raw amino-acid sequence, 156 residues long: Ribosomal RNA large subunit methyltransferase H (156 aa).

S-adenosyl-L-methionine-binding positions include Leu73, Gly104, and Leu123–Leu128.

This sequence belongs to the RNA methyltransferase RlmH family. Homodimer.

It is found in the cytoplasm. The catalysed reaction is pseudouridine(1915) in 23S rRNA + S-adenosyl-L-methionine = N(3)-methylpseudouridine(1915) in 23S rRNA + S-adenosyl-L-homocysteine + H(+). Specifically methylates the pseudouridine at position 1915 (m3Psi1915) in 23S rRNA. This is Ribosomal RNA large subunit methyltransferase H from Neisseria gonorrhoeae (strain NCCP11945).